The chain runs to 190 residues: Ras-related protein RabF1 (190 aa).

Position 15–22 (15–22 (GDSGVGKT)) interacts with GTP. The Effector region signature appears at 37–44 (HITIGIEF). GTP is bound by residues 62–66 (DTAGE) and 119–122 (NKND). Cys187 carries the post-translational modification Cysteine methyl ester. Cys187 is lipidated: S-geranylgeranyl cysteine. A propeptide spans 188 to 190 (IIN) (removed in mature form).

This sequence belongs to the small GTPase superfamily. Rab family.

The protein localises to the cell membrane. The polypeptide is Ras-related protein RabF1 (rabF1-1) (Dictyostelium discoideum (Social amoeba)).